The sequence spans 235 residues: UPF0502 protein Bcep18194_B0081 (235 aa).

This sequence belongs to the UPF0502 family.

This Burkholderia lata (strain ATCC 17760 / DSM 23089 / LMG 22485 / NCIMB 9086 / R18194 / 383) protein is UPF0502 protein Bcep18194_B0081.